Reading from the N-terminus, the 650-residue chain is Putative F-box protein R757 (650 aa).

Positions F7 to I53 constitute an F-box domain.

This chain is Putative F-box protein R757, found in Acanthamoeba polyphaga mimivirus (APMV).